Reading from the N-terminus, the 222-residue chain is MSATPRVRVLEIFASLQGEGINLGRPAVFVRLAGCPIRCIYCDTKYSWDFNAGVEMGVEEIVAKALALSVVGHVVVTGGEPLIWQRRGLEELACALRALGSVEVETSGAYPPTPELDRCVDFYDVSPKLSNAGVKAPFSPFYASSPKAWFKFVVSNADDVEEVERFVVAYGIPRGRVFLMPMAESPEEHGEALRRIWDAAVRGGFRVTPRLHIMAWGNARGK.

Substrate is bound by residues 16-18 and R31; that span reads LQG. Residues 22 to 222 enclose the Radical SAM core domain; it reads NLGRPAVFVR…IMAWGNARGK (201 aa). [4Fe-4S] cluster-binding residues include C35, C39, and C42. T44 is a binding site for Mg(2+). Position 77 (T77) interacts with substrate. S-adenosyl-L-methionine-binding positions include G79 and 126-128; that span reads SPK.

This sequence belongs to the radical SAM superfamily. 7-carboxy-7-deazaguanine synthase family. Homodimer. [4Fe-4S] cluster is required as a cofactor. Requires S-adenosyl-L-methionine as cofactor. The cofactor is Mg(2+).

The catalysed reaction is 6-carboxy-5,6,7,8-tetrahydropterin + H(+) = 7-carboxy-7-deazaguanine + NH4(+). It participates in purine metabolism; 7-cyano-7-deazaguanine biosynthesis. Functionally, catalyzes the complex heterocyclic radical-mediated conversion of 6-carboxy-5,6,7,8-tetrahydropterin (CPH4) to 7-carboxy-7-deazaguanine (CDG), a step common to the biosynthetic pathways of all 7-deazapurine-containing compounds. The sequence is that of 7-carboxy-7-deazaguanine synthase from Pyrobaculum aerophilum (strain ATCC 51768 / DSM 7523 / JCM 9630 / CIP 104966 / NBRC 100827 / IM2).